Here is a 345-residue protein sequence, read N- to C-terminus: Phosphoribosylformylglycinamidine cyclo-ligase (345 aa).

This sequence belongs to the AIR synthase family.

It is found in the cytoplasm. The enzyme catalyses 2-formamido-N(1)-(5-O-phospho-beta-D-ribosyl)acetamidine + ATP = 5-amino-1-(5-phospho-beta-D-ribosyl)imidazole + ADP + phosphate + H(+). The protein operates within purine metabolism; IMP biosynthesis via de novo pathway; 5-amino-1-(5-phospho-D-ribosyl)imidazole from N(2)-formyl-N(1)-(5-phospho-D-ribosyl)glycinamide: step 2/2. The sequence is that of Phosphoribosylformylglycinamidine cyclo-ligase from Klebsiella pneumoniae (strain 342).